Reading from the N-terminus, the 805-residue chain is 1,4-alpha-glucan-branching enzyme 2-2, chloroplastic/amyloplastic (805 aa).

Residues 1–32 constitute a chloroplast transit peptide; the sequence is MVVIHGVSLTPRFTLPSRPLNTGFNAGNSTLS. The Nucleophile role is filled by D451. E506 (proton donor) is an active-site residue.

Belongs to the glycosyl hydrolase 13 family. GlgB subfamily. Monomer. In terms of tissue distribution, expressed in seedlings, roots, stems, leaves, inflorescences, seeds and flowers.

It is found in the plastid. The protein resides in the chloroplast stroma. Its subcellular location is the amyloplast. The enzyme catalyses Transfers a segment of a (1-&gt;4)-alpha-D-glucan chain to a primary hydroxy group in a similar glucan chain.. The protein operates within glycan biosynthesis; starch biosynthesis. Its function is as follows. Catalyzes the formation of the alpha-1,6-glucosidic linkages in starch by scission of a 1,4-alpha-linked oligosaccharide from growing alpha-1,4-glucan chains and the subsequent attachment of the oligosaccharide to the alpha-1,6 position. This chain is 1,4-alpha-glucan-branching enzyme 2-2, chloroplastic/amyloplastic (SBE2.2), found in Arabidopsis thaliana (Mouse-ear cress).